The chain runs to 896 residues: Translation initiation factor IF-2 (896 aa).

Composition is skewed to basic and acidic residues over residues 94–159 (KRDP…KDKV) and 166–219 (DMTK…EKNW). The disordered stretch occupies residues 94–307 (KRDPQEAERL…GSALQQGFQK (214 aa)). Residues 256-271 (GRGRNAKAARPAKKGN) show a composition bias toward basic residues. Positions 272 to 285 (KHAESKADREEARA) are enriched in basic and acidic residues. Residues 395–564 (PRAPVVTIMG…LLQAEVLELK (170 aa)) form the tr-type G domain. A G1 region spans residues 404–411 (GHVDHGKT). 404–411 (GHVDHGKT) is a GTP binding site. Residues 429-433 (GITQH) are G2. The segment at 450 to 453 (DTPG) is G3. GTP is bound by residues 450-454 (DTPGH) and 504-507 (NKID). The G4 stretch occupies residues 504–507 (NKID). The segment at 540-542 (SAK) is G5.

Belongs to the TRAFAC class translation factor GTPase superfamily. Classic translation factor GTPase family. IF-2 subfamily.

It localises to the cytoplasm. In terms of biological role, one of the essential components for the initiation of protein synthesis. Protects formylmethionyl-tRNA from spontaneous hydrolysis and promotes its binding to the 30S ribosomal subunits. Also involved in the hydrolysis of GTP during the formation of the 70S ribosomal complex. In Klebsiella oxytoca, this protein is Translation initiation factor IF-2 (infB).